Here is a 394-residue protein sequence, read N- to C-terminus: Ribulose bisphosphate carboxylase large chain (394 aa).

The residue at position 5 (lysine 5) is an N6,N6,N6-trimethyllysine. Substrate is bound by residues asparagine 114 and threonine 164. Lysine 166 serves as the catalytic Proton acceptor. Substrate is bound at residue lysine 168. Residues lysine 192, aspartate 194, and glutamate 195 each contribute to the Mg(2+) site. Lysine 192 bears the N6-carboxylysine mark. The active-site Proton acceptor is histidine 285. Positions 286, 318, and 370 each coordinate substrate.

The protein belongs to the RuBisCO large chain family. Type I subfamily. As to quaternary structure, heterohexadecamer of 8 large chains and 8 small chains. Requires Mg(2+) as cofactor.

The protein localises to the plastid. It is found in the chloroplast. The catalysed reaction is 2 (2R)-3-phosphoglycerate + 2 H(+) = D-ribulose 1,5-bisphosphate + CO2 + H2O. The enzyme catalyses D-ribulose 1,5-bisphosphate + O2 = 2-phosphoglycolate + (2R)-3-phosphoglycerate + 2 H(+). Functionally, ruBisCO catalyzes two reactions: the carboxylation of D-ribulose 1,5-bisphosphate, the primary event in carbon dioxide fixation, as well as the oxidative fragmentation of the pentose substrate in the photorespiration process. Both reactions occur simultaneously and in competition at the same active site. This chain is Ribulose bisphosphate carboxylase large chain (rbcL), found in Cabomba caroliniana (Carolina fanwort).